We begin with the raw amino-acid sequence, 100 residues long: Large ribosomal subunit protein bL21 (100 aa).

This sequence belongs to the bacterial ribosomal protein bL21 family. In terms of assembly, part of the 50S ribosomal subunit. Contacts protein L20.

In terms of biological role, this protein binds to 23S rRNA in the presence of protein L20. The chain is Large ribosomal subunit protein bL21 from Paramagnetospirillum magneticum (strain ATCC 700264 / AMB-1) (Magnetospirillum magneticum).